We begin with the raw amino-acid sequence, 180 residues long: E1B protein, small T-antigen (180 aa).

Residues 142-180 (GPAAPLARQGSQQEEQQQRQEEEQVQEEMRSGLDPPTEN) form a disordered region. Residues 157-172 (QQQRQEEEQVQEEMRS) are compositionally biased toward basic and acidic residues.

The protein belongs to the adenoviridae E1B 19 kDa protein family.

The protein is E1B protein, small T-antigen of Simian adenovirus serotype 7 (SAdV-7).